Consider the following 310-residue polypeptide: Olfactory receptor 7A42 (310 aa).

At 1–25 (MESGNSTRRIPSFFLLGFSENPHLQ) the chain is on the extracellular side. An N-linked (GlcNAc...) asparagine glycan is attached at Asn-5. The chain crosses the membrane as a helical span at residues 26–46 (FLIFVLFLSMYLVTVLGNLLI). Residues 47–67 (IMVIITQSPLHTPMYFFLANL) lie on the Cytoplasmic side of the membrane. Residues 68 to 88 (SFVDICFTSTTVPKMLVNIQT) traverse the membrane as a helical segment. Residues 89–100 (QSKAITYADCIS) lie on the Extracellular side of the membrane. Cysteines 98 and 190 form a disulfide. Residues 101–121 (QMSVFLVFAELDNFLLAVMAY) form a helical membrane-spanning segment. Over 122 to 135 (DRYVAICHPLYYTF) the chain is Cytoplasmic. A helical membrane pass occupies residues 136–156 (IVNQHLCILMVLLSWVVSILH). Residues 157-202 (AFLQSSIVLQLTFCGDVKIPHFFCELNQLSQLTCLDSLSSHLIMNL) are Extracellular-facing. Residues 203-223 (VPVLLAVISFSSILYSYFKIV) form a helical membrane-spanning segment. The Cytoplasmic portion of the chain corresponds to 224 to 240 (SSICSISSVQGKYTAFS). Residues 241 to 261 (TCVSHLSIVFLFYSTGLGVYV) traverse the membrane as a helical segment. The Extracellular portion of the chain corresponds to 262–272 (SSAVVQSSHSA). The helical transmembrane segment at 273–293 (ARASVMYTVVTPMLNPFIYSL) threads the bilayer. At 294 to 310 (RNKDVKKALERLLEGKL) the chain is on the cytoplasmic side.

This sequence belongs to the G-protein coupled receptor 1 family.

The protein resides in the cell membrane. Functionally, odorant receptor. This is Olfactory receptor 7A42 from Mus musculus (Mouse).